We begin with the raw amino-acid sequence, 735 residues long: Diacylglycerol kinase alpha (735 aa).

EF-hand domains lie at 110 to 145 and 155 to 190; these read RPEDKLEFTFKLYDTDRNGILDSSEVDKIILQMMRV and ELRPILQEMMKEIDYDGSGSVSQAEWVRAGATTVPL. Ca(2+)-binding residues include aspartate 123, aspartate 125, asparagine 127, glutamate 134, aspartate 168, aspartate 170, serine 172, serine 174, and glutamate 179. 2 consecutive Phorbol-ester/DAG-type zinc fingers follow at residues 205 to 253 and 269 to 319; these read QHMW…ALPC and SHVW…GHEC. The 135-residue stretch at 372–506 folds into the DAGKc domain; that stretch reads PNTHPLLVFV…MDRWSVEVIP (135 aa). At lysine 484 the chain carries N6-acetyllysine.

This sequence belongs to the eukaryotic diacylglycerol kinase family. As to quaternary structure, monomer. Expressed in lymphocytes.

It localises to the cytoplasm. The protein localises to the cytosol. The enzyme catalyses a 1,2-diacyl-sn-glycerol + ATP = a 1,2-diacyl-sn-glycero-3-phosphate + ADP + H(+). The catalysed reaction is a 1-O-alkyl-sn-glycerol + ATP = a 1-O-alkyl-sn-glycero-3-phosphate + ADP + H(+). It catalyses the reaction 1-O-alkyl-2-acyl-sn-glycerol + ATP = 1-O-alkyl-2-acyl-sn-glycero-3-phosphate + ADP + H(+). It carries out the reaction 1,2-dihexadecanoyl-sn-glycerol + ATP = 1,2-dihexadecanoyl-sn-glycero-3-phosphate + ADP + H(+). The enzyme catalyses 1-hexadecanoyl-2-(9Z-octadecenoyl)-sn-glycerol + ATP = 1-hexadecanoyl-2-(9Z-octadecenoyl)-sn-glycero-3-phosphate + ADP + H(+). The catalysed reaction is 2-(9Z-octadecenoyl)-glycerol + ATP = 2-(9Z-octadecenoyl)-sn-glycero-3-phosphate + ADP + H(+). It catalyses the reaction 1,2-di-(9Z-octadecenoyl)-sn-glycerol + ATP = 1,2-di-(9Z-octadecenoyl)-sn-glycero-3-phosphate + ADP + H(+). It carries out the reaction 1-octadecanoyl-2-(5Z,8Z,11Z,14Z-eicosatetraenoyl)-sn-glycerol + ATP = 1-octadecanoyl-2-(5Z,8Z,11Z,14Z-eicosatetraenoyl)-sn-glycero-3-phosphate + ADP + H(+). The enzyme catalyses 1,2-didecanoyl-sn-glycerol + ATP = 1,2-didecanoyl-sn-glycero-3-phosphate + ADP + H(+). The catalysed reaction is 1-O-hexadecyl-2-acetyl-sn-glycerol + ATP = 1-O-hexadecyl-2-acetyl-sn-glycero-3-phosphate + ADP + H(+). It catalyses the reaction 1-O-hexadecyl-2-(5Z,8Z,11Z,14Z-eicosatetraenoyl)-sn-glycerol + ATP = 1-O-hexadecyl-2-(5Z,8Z,11Z,14Z-eicosatetraenoyl)-sn-glycero-3-phosphate + ADP + H(+). It carries out the reaction 1-O-hexadecyl-2-(9Z-octadecenoyl)-sn-glycerol + ATP = 1-O-hexadecyl-2-(9Z-octadecenoyl)-sn-glycero-3-phosphate + ADP + H(+). The enzyme catalyses 1-O-hexadecyl-sn-glycerol + ATP = 1-O-hexadecyl-sn-glycero-3-phosphate + ADP + H(+). Its pathway is lipid metabolism; glycerolipid metabolism. With respect to regulation, stimulated by calcium and phosphatidylserine. Diacylglycerol kinase that converts diacylglycerol/DAG into phosphatidic acid/phosphatidate/PA and regulates the respective levels of these two bioactive lipids. Thereby, acts as a central switch between the signaling pathways activated by these second messengers with different cellular targets and opposite effects in numerous biological processes. Also plays an important role in the biosynthesis of complex lipids. Can also phosphorylate 1-alkyl-2-acylglycerol in vitro as efficiently as diacylglycerol provided it contains an arachidonoyl group. Also involved in the production of alkyl-lysophosphatidic acid, another bioactive lipid, through the phosphorylation of 1-alkyl-2-acetyl glycerol. The polypeptide is Diacylglycerol kinase alpha (DGKA) (Homo sapiens (Human)).